The chain runs to 475 residues: Glycogen synthase (475 aa).

Lys-15 contacts ADP-alpha-D-glucose.

It belongs to the glycosyltransferase 1 family. Bacterial/plant glycogen synthase subfamily.

The catalysed reaction is [(1-&gt;4)-alpha-D-glucosyl](n) + ADP-alpha-D-glucose = [(1-&gt;4)-alpha-D-glucosyl](n+1) + ADP + H(+). It functions in the pathway glycan biosynthesis; glycogen biosynthesis. In terms of biological role, synthesizes alpha-1,4-glucan chains using ADP-glucose. The sequence is that of Glycogen synthase from Chlamydia caviae (strain ATCC VR-813 / DSM 19441 / 03DC25 / GPIC) (Chlamydophila caviae).